Reading from the N-terminus, the 480-residue chain is Protein nucleotidyltransferase YdiU (480 aa).

ATP-binding residues include Gly-86, Gly-88, Arg-89, Lys-109, Asp-121, Gly-122, Arg-172, and Arg-179. The active-site Proton acceptor is Asp-248. Positions 249 and 258 each coordinate Mg(2+). Residue Asp-258 coordinates ATP.

Belongs to the SELO family. Mg(2+) serves as cofactor. Mn(2+) is required as a cofactor.

It carries out the reaction L-seryl-[protein] + ATP = 3-O-(5'-adenylyl)-L-seryl-[protein] + diphosphate. The catalysed reaction is L-threonyl-[protein] + ATP = 3-O-(5'-adenylyl)-L-threonyl-[protein] + diphosphate. The enzyme catalyses L-tyrosyl-[protein] + ATP = O-(5'-adenylyl)-L-tyrosyl-[protein] + diphosphate. It catalyses the reaction L-histidyl-[protein] + UTP = N(tele)-(5'-uridylyl)-L-histidyl-[protein] + diphosphate. It carries out the reaction L-seryl-[protein] + UTP = O-(5'-uridylyl)-L-seryl-[protein] + diphosphate. The catalysed reaction is L-tyrosyl-[protein] + UTP = O-(5'-uridylyl)-L-tyrosyl-[protein] + diphosphate. Functionally, nucleotidyltransferase involved in the post-translational modification of proteins. It can catalyze the addition of adenosine monophosphate (AMP) or uridine monophosphate (UMP) to a protein, resulting in modifications known as AMPylation and UMPylation. This Salmonella schwarzengrund (strain CVM19633) protein is Protein nucleotidyltransferase YdiU.